The sequence spans 575 residues: Arginine--tRNA ligase (575 aa).

A 'HIGH' region motif is present at residues 136 to 146 (ANPTGPLHVGH).

The protein belongs to the class-I aminoacyl-tRNA synthetase family. Monomer.

The protein localises to the cytoplasm. The catalysed reaction is tRNA(Arg) + L-arginine + ATP = L-arginyl-tRNA(Arg) + AMP + diphosphate. The chain is Arginine--tRNA ligase from Polynucleobacter necessarius subsp. necessarius (strain STIR1).